Consider the following 338-residue polypeptide: tRNA pseudouridine synthase D (338 aa).

Residue aspartate 79 is the Nucleophile of the active site. Residues 154 to 303 (GVPNYFGEQR…EEAWRANILY (150 aa)) form the TRUD domain.

The protein belongs to the pseudouridine synthase TruD family.

The catalysed reaction is uridine(13) in tRNA = pseudouridine(13) in tRNA. In terms of biological role, responsible for synthesis of pseudouridine from uracil-13 in transfer RNAs. The sequence is that of tRNA pseudouridine synthase D from Legionella pneumophila (strain Corby).